The sequence spans 56 residues: Large ribosomal subunit protein bL32A (56 aa).

Positions 1–56 (MAVPARRTSKAKKNKRRTHKGLTAPGLSRDSETGEYRMSHRISPDGTYKGRTIIEK) are disordered. The span at 7–20 (RTSKAKKNKRRTHK) shows a compositional bias: basic residues. Residues 29-38 (RDSETGEYRM) are compositionally biased toward basic and acidic residues.

The protein belongs to the bacterial ribosomal protein bL32 family.

This Listeria innocua serovar 6a (strain ATCC BAA-680 / CLIP 11262) protein is Large ribosomal subunit protein bL32A (rpmF1).